Here is a 468-residue protein sequence, read N- to C-terminus: 6-phosphogluconate dehydrogenase, decarboxylating (468 aa).

Residues 10 to 15, 33 to 35, 74 to 76, and Asn102 each bind NADP(+); these read GMAVMG, NRS, and VKA. Substrate-binding positions include Asn102 and 128–130; that span reads SGG. Lys183 acts as the Proton acceptor in catalysis. A substrate-binding site is contributed by 186-187; that stretch reads HN. The Proton donor role is filled by Glu190. Positions 191, 260, 287, 445, and 451 each coordinate substrate.

Belongs to the 6-phosphogluconate dehydrogenase family. As to quaternary structure, homodimer.

The enzyme catalyses 6-phospho-D-gluconate + NADP(+) = D-ribulose 5-phosphate + CO2 + NADPH. Its pathway is carbohydrate degradation; pentose phosphate pathway; D-ribulose 5-phosphate from D-glucose 6-phosphate (oxidative stage): step 3/3. Functionally, catalyzes the oxidative decarboxylation of 6-phosphogluconate to ribulose 5-phosphate and CO(2), with concomitant reduction of NADP to NADPH. The chain is 6-phosphogluconate dehydrogenase, decarboxylating (gnd) from Klebsiella pneumoniae.